The following is a 765-amino-acid chain: MFSLKQPKPSFRSYLLPPQQEDKLNPETKIKKLKAVLLPGEIVVNEVNFVRKCIASDTSQYDLWGKLICTNFKISFITENSVPFQRFHYKNLLLGEHDVPLTCIEQIVVVNDTKRKQKILSHNQKLKFNPTELIIYCKDFRILRFRFDEAGPESAKKVCLALAHYSQPTDLQLLFAFEYVAQMYHKPEYKVNGIDPGGGGDFCQRTPLFETYSDWDREIKRTGASDWRVCSVNEGYMISTCLPEYFVVPSSLADQDLKQYSHAFVGRRMPLWCWNHSNGSALVRMASIKDLLQQRKIGQRVCSGITRSHPLRSDVYKCDLDHNVPSIQDIQAAFSKLRQLCVNEPFDETEEKWLSSLENAQWLEFVRTFLKQAAELAYVLDFSRRSVVLQEEEGRDVSCLVASLVQLMLDPYFRTIVGFQSLIQKEWVMSAYPFLDRCNHLKRSEKESPLFVLFLDCVWQLLQQYPAAFQFTETYLTVLHDSTRISLFGTFLFNSPHQRVQQSTEFAIARNIQLGEEKGLKFPSVWDWSLQFSAKDRALFNNPLYIGKSVPCVQNGAVKSFKRTKNYSSTMRGMPPSVKNGMAIQQDFMPRRNSLILKLKPEILQQVPVIIPSSGFEQYLRDWFTKPADLHGVILPCLHGTHIKLWKLCYLRWTPEAQINHGGFITAFHKISLLASEIELLQSRLRQYRAYPLSTVTSPVGEQNRMFFRPDELHSSNGSLDILTSSFPFSPIGNLCRRSILGTPLSKFINGAKIWLSTETLANED.

The Myotubularin phosphatase domain maps to 209–650 (FETYSDWDRE…THIKLWKLCY (442 aa)).

The protein belongs to the protein-tyrosine phosphatase family. Non-receptor class myotubularin subfamily.

This Xenopus laevis (African clawed frog) protein is Myotubularin-related protein 10-A (mtmr10-a).